Consider the following 81-residue polypeptide: Small ribosomal subunit protein bS16 (81 aa).

The protein belongs to the bacterial ribosomal protein bS16 family.

In Teredinibacter turnerae (strain ATCC 39867 / T7901), this protein is Small ribosomal subunit protein bS16.